Consider the following 127-residue polypeptide: Aspartate 1-decarboxylase (127 aa).

Catalysis depends on S25, which acts as the Schiff-base intermediate with substrate; via pyruvic acid. At S25 the chain carries Pyruvic acid (Ser). T57 provides a ligand contact to substrate. Catalysis depends on Y58, which acts as the Proton donor. Position 73–75 (73–75 (GAA)) interacts with substrate.

It belongs to the PanD family. As to quaternary structure, heterooctamer of four alpha and four beta subunits. The cofactor is pyruvate. Post-translationally, is synthesized initially as an inactive proenzyme, which is activated by self-cleavage at a specific serine bond to produce a beta-subunit with a hydroxyl group at its C-terminus and an alpha-subunit with a pyruvoyl group at its N-terminus.

The protein resides in the cytoplasm. The enzyme catalyses L-aspartate + H(+) = beta-alanine + CO2. The protein operates within cofactor biosynthesis; (R)-pantothenate biosynthesis; beta-alanine from L-aspartate: step 1/1. In terms of biological role, catalyzes the pyruvoyl-dependent decarboxylation of aspartate to produce beta-alanine. The polypeptide is Aspartate 1-decarboxylase (Bacillus cereus (strain 03BB102)).